The sequence spans 118 residues: DNA-binding protein Msm_0708 (118 aa).

A disordered region spans residues 16–39 (EARQAAAQGQMQQQAQQQMQQQEA). The span at 18–39 (RQAAAQGQMQQQAQQQMQQQEA) shows a compositional bias: low complexity.

Belongs to the PDCD5 family.

This is DNA-binding protein Msm_0708 from Methanobrevibacter smithii (strain ATCC 35061 / DSM 861 / OCM 144 / PS).